A 428-amino-acid polypeptide reads, in one-letter code: Probable protein phosphatase 2C 5 (428 aa).

Residues 25–297 (RSEKVEKPFV…DDTTCVVVDI (273 aa)) enclose the PPM-type phosphatase domain. Mn(2+)-binding residues include D73, G74, D249, and D288.

Belongs to the PP2C family. It depends on Mg(2+) as a cofactor. Requires Mn(2+) as cofactor.

It catalyses the reaction O-phospho-L-seryl-[protein] + H2O = L-seryl-[protein] + phosphate. It carries out the reaction O-phospho-L-threonyl-[protein] + H2O = L-threonyl-[protein] + phosphate. This chain is Probable protein phosphatase 2C 5, found in Arabidopsis thaliana (Mouse-ear cress).